We begin with the raw amino-acid sequence, 298 residues long: ATP synthase gamma chain (298 aa).

It belongs to the ATPase gamma chain family. In terms of assembly, F-type ATPases have 2 components, CF(1) - the catalytic core - and CF(0) - the membrane proton channel. CF(1) has five subunits: alpha(3), beta(3), gamma(1), delta(1), epsilon(1). CF(0) has three main subunits: a, b and c.

It localises to the cell inner membrane. Produces ATP from ADP in the presence of a proton gradient across the membrane. The gamma chain is believed to be important in regulating ATPase activity and the flow of protons through the CF(0) complex. In Francisella tularensis subsp. mediasiatica (strain FSC147), this protein is ATP synthase gamma chain.